Consider the following 576-residue polypeptide: Glutamine--tRNA ligase (576 aa).

Residues 47 to 57 (PEPNGYLHIGH) carry the 'HIGH' region motif. ATP contacts are provided by residues 48–50 (EPN) and 54–60 (HIGHAKS). 2 residues coordinate L-glutamine: aspartate 80 and tyrosine 229. ATP-binding positions include threonine 248 and 283–284 (RL). The 'KMSKS' region motif lies at 290–294 (ITSKR).

Belongs to the class-I aminoacyl-tRNA synthetase family. In terms of assembly, monomer.

It localises to the cytoplasm. The catalysed reaction is tRNA(Gln) + L-glutamine + ATP = L-glutaminyl-tRNA(Gln) + AMP + diphosphate. The chain is Glutamine--tRNA ligase from Ralstonia pickettii (strain 12J).